A 735-amino-acid polypeptide reads, in one-letter code: Polycomb protein sop-2 (735 aa).

Polar residues predominate over residues Met-1–Ala-15. 3 disordered regions span residues Met-1–Ser-59, Ala-223–Ala-288, and Pro-300–Gln-534. The RNA-binding stretch occupies residues Ala-224–Ser-503. Positions Tyr-239–Ala-288 are enriched in low complexity. Composition is skewed to basic and acidic residues over residues Asp-317–Arg-355 and Arg-389–Asp-398. Residues Ser-399–Asn-413 show a composition bias toward acidic residues. The segment covering Val-450–Ala-470 has biased composition (basic and acidic residues). Residues Ala-471–Ser-504 show a composition bias toward low complexity. Over residues Leu-520–Gln-534 the composition is skewed to polar residues. The interval Leu-621–Arg-712 is SAM-like.

Homodimer. Interacts with ubc-9. Binds through its N-terminal region to the N-terminal region of sor-1. Sumoylated by ubc-9. Sumoylation is required for the transcriptional regulation of homeotic genes. Widely expressed. Weakly expressed in most somatic cells of 50-cell stage embryos. At 200 cell stage, it is strongly expressed. By comma stage, it is expressed in most somatic cells.

The protein localises to the nucleus. In terms of biological role, polycomb group (PcG) protein. PcG proteins act by forming multiprotein complexes, which are required to maintain the transcriptionally repressive state of homeotic genes throughout development. PcG proteins are not required to initiate repression, but to maintain it during later stages of development. Also required to repress expression of other genes and for localization of sor-1. Binds RNA. This is Polycomb protein sop-2 (sop-2) from Caenorhabditis elegans.